The sequence spans 273 residues: Putative pyruvate, phosphate dikinase regulatory protein (273 aa).

Residue 149-156 coordinates ADP; it reads GPSRTSKT.

This sequence belongs to the pyruvate, phosphate/water dikinase regulatory protein family. PDRP subfamily.

It catalyses the reaction N(tele)-phospho-L-histidyl/L-threonyl-[pyruvate, phosphate dikinase] + ADP = N(tele)-phospho-L-histidyl/O-phospho-L-threonyl-[pyruvate, phosphate dikinase] + AMP + H(+). It carries out the reaction N(tele)-phospho-L-histidyl/O-phospho-L-threonyl-[pyruvate, phosphate dikinase] + phosphate + H(+) = N(tele)-phospho-L-histidyl/L-threonyl-[pyruvate, phosphate dikinase] + diphosphate. In terms of biological role, bifunctional serine/threonine kinase and phosphorylase involved in the regulation of the pyruvate, phosphate dikinase (PPDK) by catalyzing its phosphorylation/dephosphorylation. The sequence is that of Putative pyruvate, phosphate dikinase regulatory protein from Rickettsia conorii (strain ATCC VR-613 / Malish 7).